The chain runs to 1082 residues: Carbamoyl phosphate synthase large chain (1082 aa).

The carboxyphosphate synthetic domain stretch occupies residues 1 to 401 (MPKDKALKKV…ALLKAVRSLE (401 aa)). Residues arginine 129, arginine 169, glycine 175, glycine 176, lysine 208, valine 210, glutamate 215, glycine 241, isoleucine 242, histidine 243, glutamine 284, and glutamate 298 each coordinate ATP. Residues 133–327 (KNMCLEIGEP…IAKVATKVAV (195 aa)) enclose the ATP-grasp 1 domain. Glutamine 284, glutamate 298, and asparagine 300 together coordinate Mg(2+). Mn(2+) is bound by residues glutamine 284, glutamate 298, and asparagine 300. The oligomerization domain stretch occupies residues 402–561 (TGVTGMNLPE…YSTYEDEDEA (160 aa)). The interval 562–944 (EPQAVRKVVV…ALYKACLSAG (383 aa)) is carbamoyl phosphate synthetic domain. Residues 686-876 (DQLVAELGIP…MVNLATRICL (191 aa)) form the ATP-grasp 2 domain. 10 residues coordinate ATP: arginine 722, lysine 761, leucine 763, glutamate 767, glycine 792, isoleucine 793, histidine 794, serine 795, glutamine 835, and glutamate 847. Glutamine 835, glutamate 847, and asparagine 849 together coordinate Mg(2+). 3 residues coordinate Mn(2+): glutamine 835, glutamate 847, and asparagine 849. The MGS-like domain occupies 945-1082 (YTLPSSGKAV…PLIPLQEYVS (138 aa)). Residues 945–1082 (YTLPSSGKAV…PLIPLQEYVS (138 aa)) form an allosteric domain region.

Belongs to the CarB family. Composed of two chains; the small (or glutamine) chain promotes the hydrolysis of glutamine to ammonia, which is used by the large (or ammonia) chain to synthesize carbamoyl phosphate. Tetramer of heterodimers (alpha,beta)4. It depends on Mg(2+) as a cofactor. Mn(2+) is required as a cofactor.

The enzyme catalyses hydrogencarbonate + L-glutamine + 2 ATP + H2O = carbamoyl phosphate + L-glutamate + 2 ADP + phosphate + 2 H(+). It carries out the reaction hydrogencarbonate + NH4(+) + 2 ATP = carbamoyl phosphate + 2 ADP + phosphate + 2 H(+). The protein operates within amino-acid biosynthesis; L-arginine biosynthesis; carbamoyl phosphate from bicarbonate: step 1/1. Its pathway is pyrimidine metabolism; UMP biosynthesis via de novo pathway; (S)-dihydroorotate from bicarbonate: step 1/3. Large subunit of the glutamine-dependent carbamoyl phosphate synthetase (CPSase). CPSase catalyzes the formation of carbamoyl phosphate from the ammonia moiety of glutamine, carbonate, and phosphate donated by ATP, constituting the first step of 2 biosynthetic pathways, one leading to arginine and/or urea and the other to pyrimidine nucleotides. The large subunit (synthetase) binds the substrates ammonia (free or transferred from glutamine from the small subunit), hydrogencarbonate and ATP and carries out an ATP-coupled ligase reaction, activating hydrogencarbonate by forming carboxy phosphate which reacts with ammonia to form carbamoyl phosphate. The sequence is that of Carbamoyl phosphate synthase large chain from Desulforudis audaxviator (strain MP104C).